The sequence spans 377 residues: UPF0754 membrane protein lwe2241 (377 aa).

The next 2 helical transmembrane spans lie at 1-21 (MSVL…GAMT) and 357-377 (YLGG…AIWI).

Belongs to the UPF0754 family.

It is found in the cell membrane. The sequence is that of UPF0754 membrane protein lwe2241 from Listeria welshimeri serovar 6b (strain ATCC 35897 / DSM 20650 / CCUG 15529 / CIP 8149 / NCTC 11857 / SLCC 5334 / V8).